The primary structure comprises 424 residues: Enolase (424 aa).

A (2R)-2-phosphoglycerate-binding site is contributed by Gln163. The active-site Proton donor is the Glu205. Mg(2+) contacts are provided by Asp242, Glu285, and Asp312. Lys337, Arg366, Ser367, and Lys388 together coordinate (2R)-2-phosphoglycerate. Lys337 acts as the Proton acceptor in catalysis.

Belongs to the enolase family. Mg(2+) is required as a cofactor.

Its subcellular location is the cytoplasm. The protein resides in the secreted. It is found in the cell surface. The catalysed reaction is (2R)-2-phosphoglycerate = phosphoenolpyruvate + H2O. The protein operates within carbohydrate degradation; glycolysis; pyruvate from D-glyceraldehyde 3-phosphate: step 4/5. In terms of biological role, catalyzes the reversible conversion of 2-phosphoglycerate (2-PG) into phosphoenolpyruvate (PEP). It is essential for the degradation of carbohydrates via glycolysis. This is Enolase from Dinoroseobacter shibae (strain DSM 16493 / NCIMB 14021 / DFL 12).